The primary structure comprises 560 residues: Putative protease Do-like 11, mitochondrial (560 aa).

Residues M1–R65 constitute a mitochondrion transit peptide. The segment at T117 to S302 is serine protease. Catalysis depends on charge relay system residues H150, D184, and S258. In terms of domain architecture, PDZ spans I288–E384.

This sequence belongs to the peptidase S1C family.

The protein resides in the mitochondrion membrane. In terms of biological role, putative serine protease. In Arabidopsis thaliana (Mouse-ear cress), this protein is Putative protease Do-like 11, mitochondrial (DEGP11).